The chain runs to 470 residues: V-type proton ATPase subunit S1 (470 aa).

Positions 1–41 are cleaved as a signal peptide; the sequence is MMAAMATARVRMGPRCAQALWRMPWLPVFLSLAAAAAAAAA. The propeptide occupies 42-231; that stretch reads EQQVPLVLWS…TAVRPSRVAR (190 aa). The Lumenal segment spans residues 42-419; it reads EQQVPLVLWS…EQFSYASDCA (378 aa). N-linked (GlcNAc...) asparagine glycans are attached at residues Asn-170, Asn-261, Asn-273, Asn-296, Asn-303, Asn-350, and Asn-357. Cysteines 371 and 418 form a disulfide. The chain crosses the membrane as a helical span at residues 420–440; the sequence is SFFSPGIWMGLLTSLFMLFIF. Over 441–470 the chain is Cytoplasmic; that stretch reads TYGLHMILSLKTMDRFDDHKGPTISLTQIV. Ser-465 is subject to Phosphoserine.

It belongs to the vacuolar ATPase subunit S1 family. In terms of assembly, accessory component of the multisubunit proton-transporting vacuolar (V)-ATPase protein pump. Interacts (via N-terminus) with ATP6AP2 (via N-terminus). Interacts with RNASEK. Interacts with TMEM106B (via C-terminus). N-glycosylated. In terms of tissue distribution, widely expressed, with highest levels in brain and lowest in liver and duodenum.

It is found in the endoplasmic reticulum membrane. The protein resides in the endoplasmic reticulum-Golgi intermediate compartment membrane. It localises to the cytoplasmic vesicle. Its subcellular location is the secretory vesicle. The protein localises to the synaptic vesicle membrane. It is found in the clathrin-coated vesicle membrane. Functionally, accessory subunit of the proton-transporting vacuolar (V)-ATPase protein pump, which is required for luminal acidification of secretory vesicles. Guides the V-type ATPase into specialized subcellular compartments, such as neuroendocrine regulated secretory vesicles or the ruffled border of the osteoclast, thereby regulating its activity. Involved in membrane trafficking and Ca(2+)-dependent membrane fusion. May play a role in the assembly of the V-type ATPase complex. In aerobic conditions, involved in intracellular iron homeostasis, thus triggering the activity of Fe(2+) prolyl hydroxylase (PHD) enzymes, and leading to HIF1A hydroxylation and subsequent proteasomal degradation. In islets of Langerhans cells, may regulate the acidification of dense-core secretory granules. The sequence is that of V-type proton ATPase subunit S1 (ATP6AP1) from Homo sapiens (Human).